The sequence spans 193 residues: MYHDLIRSELNEAADTLAKFINDDANIDAIQRAAVLLADSFKAGGKVISCGNGGSHCDAMHFAEELTGRYRENRPGYPAIAISDVSHLSCVSNDFGYEYVFSRYVEAVGREGDVLLGISTSGNSGNIIKAIEAARAKGMKVITLTGKDGGKMAGSADVEIRVPHFGYADRIQEIHIKAIHILIQLIEKEMVKA.

Positions 37-193 (LADSFKAGGK…QLIEKEMVKA (157 aa)) constitute an SIS domain. 52 to 54 (NGG) provides a ligand contact to substrate. Positions 61 and 65 each coordinate Zn(2+). Substrate-binding positions include Glu65, 93–94 (ND), 119–121 (STS), Ser124, and Gln172. The Zn(2+) site is built by Gln172 and His180.

Belongs to the SIS family. GmhA subfamily. In terms of assembly, homotetramer. Requires Zn(2+) as cofactor.

It localises to the cytoplasm. The catalysed reaction is 2 D-sedoheptulose 7-phosphate = D-glycero-alpha-D-manno-heptose 7-phosphate + D-glycero-beta-D-manno-heptose 7-phosphate. It participates in carbohydrate biosynthesis; D-glycero-D-manno-heptose 7-phosphate biosynthesis; D-glycero-alpha-D-manno-heptose 7-phosphate and D-glycero-beta-D-manno-heptose 7-phosphate from sedoheptulose 7-phosphate: step 1/1. Catalyzes the isomerization of sedoheptulose 7-phosphate in D-glycero-D-manno-heptose 7-phosphate. This Serratia proteamaculans (strain 568) protein is Phosphoheptose isomerase.